Consider the following 445-residue polypeptide: MSKKLYIKTYGCQMNVYDSVKMQDLLYPFGYEPTENIEDADVIILITCHIREKAAEKTYSELGRIKKLQDTRKKQGLNSAIIVVAGCVAQAEGEEIFSRAPYVDIVVGPQSYYNLPELISKVVRHEKHLIDLDFVEEAKFDNLPEQLYPQGASSFISVQEGCDKFCTFCVVPYTRGAEFSRNVEQVYREALKVVSSGAKEITLLGQNVNAYHGKGPDDKIFTLADLLGHLAQIPNLERLRYMTSHPIDMTDDLIKLHGTEPKLMPFLHLPVQSGSNKILKAMNRKHDRDYYFDIINRLRETRPDIVLSSDFIVGFPGETDEDFEDTLDLVRRVKYGQCYSFKYSPRPGTPGATRTDQVPEHIKSERLTILQQELTAQQLAFNESCVGSIMKVLFDRNGKFDDQIIGKTPYMQSVYIQNPNKSLLGKITDVKITKAASNSLTGEVI.

One can recognise an MTTase N-terminal domain in the interval 3–124 (KKLYIKTYGC…LPELISKVVR (122 aa)). [4Fe-4S] cluster-binding residues include Cys12, Cys48, Cys87, Cys162, Cys166, and Cys169. The Radical SAM core domain occupies 148–380 (YPQGASSFIS…QQELTAQQLA (233 aa)). Positions 383–445 (ESCVGSIMKV…ASNSLTGEVI (63 aa)) constitute a TRAM domain.

This sequence belongs to the methylthiotransferase family. MiaB subfamily. As to quaternary structure, monomer. [4Fe-4S] cluster serves as cofactor.

It localises to the cytoplasm. It carries out the reaction N(6)-dimethylallyladenosine(37) in tRNA + (sulfur carrier)-SH + AH2 + 2 S-adenosyl-L-methionine = 2-methylsulfanyl-N(6)-dimethylallyladenosine(37) in tRNA + (sulfur carrier)-H + 5'-deoxyadenosine + L-methionine + A + S-adenosyl-L-homocysteine + 2 H(+). Catalyzes the methylthiolation of N6-(dimethylallyl)adenosine (i(6)A), leading to the formation of 2-methylthio-N6-(dimethylallyl)adenosine (ms(2)i(6)A) at position 37 in tRNAs that read codons beginning with uridine. The sequence is that of tRNA-2-methylthio-N(6)-dimethylallyladenosine synthase from Rickettsia felis (strain ATCC VR-1525 / URRWXCal2) (Rickettsia azadi).